The chain runs to 186 residues: Protein GrpE (186 aa).

The protein belongs to the GrpE family. Homodimer.

It is found in the cytoplasm. Its function is as follows. Participates actively in the response to hyperosmotic and heat shock by preventing the aggregation of stress-denatured proteins, in association with DnaK and GrpE. It is the nucleotide exchange factor for DnaK and may function as a thermosensor. Unfolded proteins bind initially to DnaJ; upon interaction with the DnaJ-bound protein, DnaK hydrolyzes its bound ATP, resulting in the formation of a stable complex. GrpE releases ADP from DnaK; ATP binding to DnaK triggers the release of the substrate protein, thus completing the reaction cycle. Several rounds of ATP-dependent interactions between DnaJ, DnaK and GrpE are required for fully efficient folding. In Novosphingobium aromaticivorans (strain ATCC 700278 / DSM 12444 / CCUG 56034 / CIP 105152 / NBRC 16084 / F199), this protein is Protein GrpE.